A 307-amino-acid chain; its full sequence is NAD kinase 2 (307 aa).

Asp77 acts as the Proton acceptor in catalysis. NAD(+) contacts are provided by residues 77 to 78, 151 to 152, Asp181, 192 to 197, and Asn251; these read DG, NE, and TAYALS.

It belongs to the NAD kinase family. A divalent metal cation is required as a cofactor.

It localises to the cytoplasm. The enzyme catalyses NAD(+) + ATP = ADP + NADP(+) + H(+). Functionally, involved in the regulation of the intracellular balance of NAD and NADP, and is a key enzyme in the biosynthesis of NADP. Catalyzes specifically the phosphorylation on 2'-hydroxyl of the adenosine moiety of NAD to yield NADP. This Thermosynechococcus vestitus (strain NIES-2133 / IAM M-273 / BP-1) protein is NAD kinase 2.